We begin with the raw amino-acid sequence, 724 residues long: Transcription factor dcp-66 (724 aa).

Polar residues-rich tracts occupy residues 1–12 and 56–70; these read MAQVQQVPSSPM and GAST…QLSP. 2 disordered regions span residues 1-23 and 55-129; these read MAQV…GNGL and NGAS…KRRL. Residues 85–95 show a composition bias toward basic and acidic residues; it reads AQEKIKLKDDI. A compositionally biased stretch (acidic residues) spans 105 to 119; it reads DDDDMEDEELGDEIN. The stretch at 186–216 forms a coiled coil; that stretch reads EEQLRERLNMRREAENQLREEEAKLLVLRKM. Disordered regions lie at residues 328-361 and 523-590; these read KELS…QITQ and AAPA…QLQQ. Residues 332–358 are compositionally biased toward low complexity; that stretch reads AAETNASASASPAVQQSQQAQQPQQAQ. Polar residues-rich tracts occupy residues 527 to 541 and 551 to 564; these read TSQT…TVSS and IPSS…TQAV. Over residues 565 to 590 the composition is skewed to low complexity; sequence KTSTPIHSTPKSSSSSAKKTAAQLQQ.

In terms of tissue distribution, expressed at low levels in excretory cell, pharynx, vulva, and posterior neurons in adults. Strongly expressed in the excretory cell and more weakly in the pharynx in larva. Embryonic expression in the excretory cell.

It localises to the nucleus. Functionally, transcription factor which binds to the 5'-CCATACATTA-3' motif found in the promoter region of pgp-12 and activates its expression in the excretory cell. This is Transcription factor dcp-66 from Caenorhabditis elegans.